Consider the following 318-residue polypeptide: NADH-ubiquinone oxidoreductase chain 1 (318 aa).

8 helical membrane passes run 2–22, 69–89, 100–120, 146–166, 171–191, 231–251, 253–273, and 285–305; these read FMINIACLIIPILLAVAFLTL, LLFTVAPTLALTLALTMWLPL, LGVLFILAISSLAVYSILWSG, LAIILLSVLLMSGSFTLTNLI, HMWLIIPTWPLAMMWFISTLA, IMMMNALTTLLFLGALHTPLV, GIYTANFVLKTLILTIMFLWI, and LMHLLWKNFLPLTLAMLMWHV.

Belongs to the complex I subunit 1 family. Core subunit of respiratory chain NADH dehydrogenase (Complex I) which is composed of 45 different subunits.

It is found in the mitochondrion inner membrane. It catalyses the reaction a ubiquinone + NADH + 5 H(+)(in) = a ubiquinol + NAD(+) + 4 H(+)(out). Its function is as follows. Core subunit of the mitochondrial membrane respiratory chain NADH dehydrogenase (Complex I) which catalyzes electron transfer from NADH through the respiratory chain, using ubiquinone as an electron acceptor. Essential for the catalytic activity and assembly of complex I. This Myrmecophaga tridactyla (Giant anteater) protein is NADH-ubiquinone oxidoreductase chain 1 (MT-ND1).